The following is an 86-amino-acid chain: Small ribosomal subunit protein bS20 (86 aa).

It belongs to the bacterial ribosomal protein bS20 family.

Its function is as follows. Binds directly to 16S ribosomal RNA. The polypeptide is Small ribosomal subunit protein bS20 (Kineococcus radiotolerans (strain ATCC BAA-149 / DSM 14245 / SRS30216)).